The sequence spans 624 residues: Phosphatidylinositol 4-kinase lsb6 (624 aa).

Residues 1 to 31 show a composition bias toward polar residues; the sequence is MESTFHSDTLDSFPNYQENSLNTNEEQTNPL. The disordered stretch occupies residues 1–53; the sequence is MESTFHSDTLDSFPNYQENSLNTNEEQTNPLESLRDGWASSNSSSSSSLLLPD. A compositionally biased stretch (low complexity) spans 40–51; the sequence is SSNSSSSSSLLL. Positions 145 to 520 constitute a PI3K/PI4K catalytic domain; it reads GVFPVLISKG…LLELPNLYVV (376 aa). The G-loop stretch occupies residues 151–157; sequence ISKGSSG. The interval 346–354 is catalytic loop; sequence RNTDRNLDN. An activation loop region spans residues 409-429; sequence AIDNSLAFPYKHPDSWRSFPY.

This sequence belongs to the PI3/PI4-kinase family. Mg(2+) serves as cofactor. It depends on Mn(2+) as a cofactor.

It is found in the cell membrane. The protein localises to the vacuole membrane. It localises to the golgi apparatus membrane. The enzyme catalyses a 1,2-diacyl-sn-glycero-3-phospho-(1D-myo-inositol) + ATP = a 1,2-diacyl-sn-glycero-3-phospho-(1D-myo-inositol 4-phosphate) + ADP + H(+). May play a role in endocytic and/or exocytic pathways. The polypeptide is Phosphatidylinositol 4-kinase lsb6 (lsb6) (Schizosaccharomyces pombe (strain 972 / ATCC 24843) (Fission yeast)).